Reading from the N-terminus, the 88-residue chain is Small ribosomal subunit protein uS17 (88 aa).

This sequence belongs to the universal ribosomal protein uS17 family. As to quaternary structure, part of the 30S ribosomal subunit.

In terms of biological role, one of the primary rRNA binding proteins, it binds specifically to the 5'-end of 16S ribosomal RNA. This is Small ribosomal subunit protein uS17 from Mycoplasmopsis agalactiae (strain NCTC 10123 / CIP 59.7 / PG2) (Mycoplasma agalactiae).